The chain runs to 475 residues: MNTALAQQIANEGGVEAWMIAQQHKSLLRFLTCGSVDDGKSTLIGRLLHDTRQIYEDQLSSLHNDSKRHGTQGEKLDLALLVDGLQAEREQGITIDVAYRYFSTEKRKFIIADTPGHEQYTRNMATGASTCELAILLIDARKGVLDQTRRHSFISTLLGIKHLVVAINKMDLVDYSEETFTRIRKDYLTFAEQLPGNLDIRFVPLSALEGDNVASQSESMPWYSGPTLLEVLETVEIQRVVDAQPMRFPVQYVNRPNLDFRGYAGTLASGRVEVGQRVKVLPSGVESNVARIVTFDGDREEAFAGEAITLVLTDEIDISRGDLLLAADEALPAVQSASVDVVWMAEQPLSPGQSYDIKIAGKKTRARVDGIRYQVDINNLTQREVENLPLNGIGLVDLTFDEPLVLDRYQQNPVTGGLIFIDRLSNVTVGAGMVHEPVSQATAAPSEFSAFELELNALVRRHFPHWGARDLLGDK.

The tr-type G domain maps to 25 to 239 (KSLLRFLTCG…EVLETVEIQR (215 aa)). A G1 region spans residues 34-41 (GSVDDGKS). Residue 34 to 41 (GSVDDGKS) participates in GTP binding. The interval 92–96 (GITID) is G2. A G3 region spans residues 113-116 (DTPG). GTP contacts are provided by residues 113–117 (DTPGH) and 168–171 (NKMD). The G4 stretch occupies residues 168 to 171 (NKMD). The tract at residues 206 to 208 (SAL) is G5.

It belongs to the TRAFAC class translation factor GTPase superfamily. Classic translation factor GTPase family. CysN/NodQ subfamily. Heterodimer composed of CysD, the smaller subunit, and CysN.

It catalyses the reaction sulfate + ATP + H(+) = adenosine 5'-phosphosulfate + diphosphate. Its pathway is sulfur metabolism; hydrogen sulfide biosynthesis; sulfite from sulfate: step 1/3. Functionally, with CysD forms the ATP sulfurylase (ATPS) that catalyzes the adenylation of sulfate producing adenosine 5'-phosphosulfate (APS) and diphosphate, the first enzymatic step in sulfur assimilation pathway. APS synthesis involves the formation of a high-energy phosphoric-sulfuric acid anhydride bond driven by GTP hydrolysis by CysN coupled to ATP hydrolysis by CysD. The sequence is that of Sulfate adenylyltransferase subunit 1 from Escherichia coli O139:H28 (strain E24377A / ETEC).